A 434-amino-acid polypeptide reads, in one-letter code: Enolase A (434 aa).

Residues histidine 160 and glutamate 169 each coordinate substrate. Glutamate 212 acts as the Proton donor in catalysis. The Mg(2+) site is built by aspartate 247, glutamate 296, and aspartate 321. 2 residues coordinate substrate: glutamate 296 and aspartate 321. The Proton acceptor role is filled by lysine 346. Residues serine 373–serine 376 and lysine 397 contribute to the substrate site.

The protein belongs to the enolase family. In terms of assembly, homodimer. Mg(2+) serves as cofactor.

It localises to the cytoplasm. The catalysed reaction is (2R)-2-phosphoglycerate = phosphoenolpyruvate + H2O. The protein operates within carbohydrate degradation; glycolysis; pyruvate from D-glyceraldehyde 3-phosphate: step 4/5. The polypeptide is Enolase A (enoA) (Dictyostelium discoideum (Social amoeba)).